Reading from the N-terminus, the 340-residue chain is Probable cyclic nucleotide phosphodiesterase PsycPRwf_0181 (340 aa).

The segment at 1 to 36 is disordered; the sequence is MAPLPHSVSPRHTQVADNGRLSEPTDYHPPTEISTD. Fe cation-binding residues include aspartate 47, histidine 49, aspartate 128, asparagine 158, histidine 237, histidine 276, and histidine 278. AMP is bound by residues histidine 49, aspartate 128, and 158 to 159; that span reads NH. An AMP-binding site is contributed by histidine 278.

This sequence belongs to the cyclic nucleotide phosphodiesterase class-III family. Fe(2+) is required as a cofactor.

This Psychrobacter sp. (strain PRwf-1) protein is Probable cyclic nucleotide phosphodiesterase PsycPRwf_0181.